Consider the following 258-residue polypeptide: Membrane-associated protein Vipp1 (258 aa).

Residues 217–258 (MLPPATPVTQAQLPPQQETTPAKSNEVVDAELDSLRKQLDQL) are disordered. Positions 223–239 (PVTQAQLPPQQETTPAK) are enriched in polar residues. Positions 249–258 (DSLRKQLDQL) are enriched in basic and acidic residues.

Belongs to the PspA/Vipp/IM30 family. As to quaternary structure, polymerizes to form rings, filaments and ribbons. Rings are formed by stacked rungs that tilt to give a dome-shaped curvature. Rings form with symmetries ranging from C11 (55 subunits) to C17 (119 subunits).

The protein resides in the cell inner membrane. Its function is as follows. A membrane remodeling protein capable of forming rings and/or filaments on membranes, which then curve and tubulate the bilayer. Rings will form on liposomes, altering their positive curvature so the lipid bilayer is remodeled into a negative curve as the membrane enters the ring. Ring stacks of varying lengths can be seen joining isolated liposomes. A lipid monolayer can be drawn into the center of the rings. Required for thylakoid formation. The protein is Membrane-associated protein Vipp1 of Nostoc punctiforme (strain ATCC 29133 / PCC 73102).